The sequence spans 249 residues: Homeobox-leucine zipper protein HOX6 (249 aa).

A disordered region spans residues 1–32 (MDGEEDSEWMMMDVGGKGGKGGGGGGAADRKK). The segment covering 15-27 (GGKGGKGGGGGGA) has biased composition (gly residues). The homeobox DNA-binding region spans 27 to 86 (AADRKKRFSEEQIKSLESMFATQTKLEPRQKLQLARELGLQPRQVAIWFQNKRARWKSKQ). Residues 85–129 (KQLEREYSALRDDYDALLCSYESLKKEKLALIKQLEKLAEMLQEP) form a leucine-zipper region. Positions 194–249 (FLRPSSQHHPPPPHAGAGFTSSEPAADHQSFNFHSSWPSSTEQTCSSTPWWEFESE) are disordered. Residues 212–242 (FTSSEPAADHQSFNFHSSWPSSTEQTCSSTP) are compositionally biased toward polar residues.

This sequence belongs to the HD-ZIP homeobox family. Class I subfamily. Expressed in seedlings, roots, leaves, nodes, internodes, flowers and embryo.

The protein resides in the nucleus. In terms of biological role, probable transcription factor that binds to the DNA sequence 5'-CAAT[AT]ATTG-3'. The sequence is that of Homeobox-leucine zipper protein HOX6 (HOX6) from Oryza sativa subsp. indica (Rice).